The chain runs to 74 residues: Apolipoprotein C-I, acidic form (74 aa).

The N-terminal stretch at 1 to 26 (MRLFLSLPVLVVVLSMVLEGPTPAQG) is a signal peptide.

The protein belongs to the apolipoprotein C1 family.

The protein resides in the secreted. This is Apolipoprotein C-I, acidic form (APOC1A) from Colobus guereza (Mantled guereza).